The sequence spans 702 residues: Ribosomal RNA large subunit methyltransferase K/L (702 aa).

The THUMP domain occupies 43–154 (LVYQSLMWSR…KETASIALDL (112 aa)).

Belongs to the methyltransferase superfamily. RlmKL family.

The protein resides in the cytoplasm. The catalysed reaction is guanosine(2445) in 23S rRNA + S-adenosyl-L-methionine = N(2)-methylguanosine(2445) in 23S rRNA + S-adenosyl-L-homocysteine + H(+). It catalyses the reaction guanosine(2069) in 23S rRNA + S-adenosyl-L-methionine = N(2)-methylguanosine(2069) in 23S rRNA + S-adenosyl-L-homocysteine + H(+). In terms of biological role, specifically methylates the guanine in position 2445 (m2G2445) and the guanine in position 2069 (m7G2069) of 23S rRNA. The protein is Ribosomal RNA large subunit methyltransferase K/L of Shigella sonnei (strain Ss046).